A 422-amino-acid polypeptide reads, in one-letter code: MTELSSFKAPKGVPDYLPPASAEFVAVRNGLLAAARRAGYGDIELPIFEDTALFARGVGESTDVVSKEMYTFADRGDRSVTLRPEGTAGVMRAVIEHGLDRGQLPVKLCYSGPFFRYERPQAGRYRQLQQVGVEAIGVDDPALDAEVIAVADAGFRSLGLDGFRLDITSLGDDSCRPQYRELLQEFLFKLDLDEETRRRAEINPLRVLDDKRPHMKEMTADAPVMLDHLSDAAKQHFDTVLAHLDALSVPYVINPRMVRGLDYYTKTTFEFVHDGLGAQSGIGGGGRYDGLMHQLGGRDLSGIGFGLGVDRTLLALRAEGKTAGETARVDVYAVPLGGDAKVRLAVLAAQLRAAGVRVDVAYGDRSLKGAMKGADRSGASIALVAGDRDLEAGTVGMKSMATGEQVDVAVEGVVAEVLSRLS.

The protein belongs to the class-II aminoacyl-tRNA synthetase family. Homodimer.

It localises to the cytoplasm. It catalyses the reaction tRNA(His) + L-histidine + ATP = L-histidyl-tRNA(His) + AMP + diphosphate + H(+). This Mycolicibacterium vanbaalenii (strain DSM 7251 / JCM 13017 / BCRC 16820 / KCTC 9966 / NRRL B-24157 / PYR-1) (Mycobacterium vanbaalenii) protein is Histidine--tRNA ligase.